The chain runs to 1026 residues: Multidrug resistance protein MdtC (1026 aa).

11 helical membrane-spanning segments follow: residues 15 to 35, 333 to 353, 360 to 380, 387 to 407, 431 to 451, 463 to 483, 528 to 548, 853 to 873, 897 to 917, 953 to 973, and 984 to 1004; these read ILIA…LPVA, EVEE…FLFL, LIPA…MYLC, LSLM…IVVL, VGFT…PLLL, FAVT…TLTP, LVGV…IAIP, LILI…LYES, LFNA…IGIV, PIMM…LSGG, and ITIV…TPVV.

The protein belongs to the resistance-nodulation-cell division (RND) (TC 2.A.6) family. MdtC subfamily. In terms of assembly, part of a tripartite efflux system composed of MdtA, MdtB and MdtC. MdtC forms a heteromultimer with MdtB.

Its subcellular location is the cell inner membrane. In Salmonella arizonae (strain ATCC BAA-731 / CDC346-86 / RSK2980), this protein is Multidrug resistance protein MdtC.